Here is a 179-residue protein sequence, read N- to C-terminus: Embryo-specific protein ATS3A (179 aa).

Positions 1 to 22 (MLRLAIPLFLFALCSFTLFSSA) are cleaved as a signal peptide. One can recognise a PLAT domain in the interval 48-158 (CSYTVIIKTS…NSVWYGFNVC (111 aa)).

As to quaternary structure, interacts with EULS3 (via N-terminus). As to expression, expressed in roots, rosette leaves, stems, cauline leaves and flowers.

It localises to the secreted. Its function is as follows. May play a role during embryo development. In Arabidopsis thaliana (Mouse-ear cress), this protein is Embryo-specific protein ATS3A.